Here is a 394-residue protein sequence, read N- to C-terminus: Putative 8-amino-7-oxononanoate synthase (394 aa).

Position 30 (R30) interacts with substrate. 117–118 (GY) lines the pyridoxal 5'-phosphate pocket. Residue H142 coordinates substrate. Pyridoxal 5'-phosphate-binding positions include S190, 215–218 (DEAH), and 246–249 (TLSK). K249 is modified (N6-(pyridoxal phosphate)lysine). T364 serves as a coordination point for substrate.

Belongs to the class-II pyridoxal-phosphate-dependent aminotransferase family. BioF subfamily. In terms of assembly, homodimer. Requires pyridoxal 5'-phosphate as cofactor.

The catalysed reaction is 6-carboxyhexanoyl-[ACP] + L-alanine + H(+) = (8S)-8-amino-7-oxononanoate + holo-[ACP] + CO2. It functions in the pathway cofactor biosynthesis; biotin biosynthesis. Catalyzes the decarboxylative condensation of pimeloyl-[acyl-carrier protein] and L-alanine to produce 8-amino-7-oxononanoate (AON), [acyl-carrier protein], and carbon dioxide. The sequence is that of Putative 8-amino-7-oxononanoate synthase (bioF) from Nostoc punctiforme (strain ATCC 29133 / PCC 73102).